A 304-amino-acid chain; its full sequence is MEENNQAFHSGFVAIVGRPNVGKSTFLNYVIGQKVAIMSNVPQTTRNKIQGIYTTDREQIVFIDTPGIHKSHNKLGDFMVQSAMSSLNEVDAIMFMVNADEPRGAGDNYIIERLKKITDRPVYLVINKIDLVHPDELLPIVDSYKDAMDWTEVFPISALQGNNINELVTTLSQHMPEGPKYYPDDQVTDHPERFVVSELIREKVLQLTRQEVPHSVAVVIETMKSNDEGLVNIQATIIVDRSSQKGIVIGKGGKMLKEIGSRARVDIEHLLGSRVYLELWVKVSEGWRDKQGILQSFGYKKDEY.

One can recognise an Era-type G domain in the interval 9-177 (HSGFVAIVGR…VTTLSQHMPE (169 aa)). The segment at 17–24 (GRPNVGKS) is G1. Residue 17 to 24 (GRPNVGKS) participates in GTP binding. Residues 43–47 (QTTRN) are G2. A G3 region spans residues 64-67 (DTPG). Residues 64–68 (DTPGI) and 127–130 (NKID) each bind GTP. The tract at residues 127 to 130 (NKID) is G4. The interval 156–158 (ISA) is G5. The 78-residue stretch at 208–285 (TRQEVPHSVA…YLELWVKVSE (78 aa)) folds into the KH type-2 domain.

Belongs to the TRAFAC class TrmE-Era-EngA-EngB-Septin-like GTPase superfamily. Era GTPase family. As to quaternary structure, monomer.

It localises to the cytoplasm. The protein resides in the cell membrane. Functionally, an essential GTPase that binds both GDP and GTP, with rapid nucleotide exchange. Plays a role in 16S rRNA processing and 30S ribosomal subunit biogenesis and possibly also in cell cycle regulation and energy metabolism. This is GTPase Era from Pediococcus pentosaceus (strain ATCC 25745 / CCUG 21536 / LMG 10740 / 183-1w).